The chain runs to 594 residues: NADH-ubiquinone oxidoreductase chain 5 (594 aa).

The next 15 helical transmembrane spans lie at 1-21, 43-63, 87-107, 114-134, 137-157, 171-191, 211-233, 241-261, 272-292, 301-320, 325-347, 366-386, 409-429, 457-477, and 486-506; these read MNLFSSTTLTMLFVLTLPIMM, AFLISLVPMIAFTNTGQEMII, IVFAPVALFVTWSIMEFSMWY, INQFFKYLLLFLITMMILVTA, LFQLFIGWEGVGIMSFLLIGW, AILYNRIGDVGFIMAMAWFLS, LPLMGLILAATGKSAQFGLHPWL, TPVSALLHSSTMVVAGVFLLI, LMQTITMCLGAITTLFTAMCA, IIAFSTSSQLGLMMVTIGIN, AFLHICTHAFFKAMLFMCSGSII, MPFTTTTLIVGSMALTGVPFL, LLITLVATSLTAVYSTRIIFF, LMAGSIFAGFILSHNLPPMTT, and LKMTALAVTMLGFTLAFEITL.

This sequence belongs to the complex I subunit 5 family. In terms of assembly, core subunit of respiratory chain NADH dehydrogenase (Complex I) which is composed of 45 different subunits.

The protein localises to the mitochondrion inner membrane. The catalysed reaction is a ubiquinone + NADH + 5 H(+)(in) = a ubiquinol + NAD(+) + 4 H(+)(out). Its function is as follows. Core subunit of the mitochondrial membrane respiratory chain NADH dehydrogenase (Complex I) which catalyzes electron transfer from NADH through the respiratory chain, using ubiquinone as an electron acceptor. Essential for the catalytic activity and assembly of complex I. This is NADH-ubiquinone oxidoreductase chain 5 (MT-ND5) from Hippopotamus amphibius (Hippopotamus).